A 273-amino-acid chain; its full sequence is Putative phosphoenolpyruvate synthase regulatory protein (273 aa).

Residue glycine 154 to threonine 161 participates in ADP binding.

Belongs to the pyruvate, phosphate/water dikinase regulatory protein family. PSRP subfamily.

The enzyme catalyses [pyruvate, water dikinase] + ADP = [pyruvate, water dikinase]-phosphate + AMP + H(+). It catalyses the reaction [pyruvate, water dikinase]-phosphate + phosphate + H(+) = [pyruvate, water dikinase] + diphosphate. In terms of biological role, bifunctional serine/threonine kinase and phosphorylase involved in the regulation of the phosphoenolpyruvate synthase (PEPS) by catalyzing its phosphorylation/dephosphorylation. The protein is Putative phosphoenolpyruvate synthase regulatory protein of Neisseria meningitidis serogroup B (strain ATCC BAA-335 / MC58).